The following is a 332-amino-acid chain: Stage II sporulation protein B (332 aa).

The segment covering 1 to 10 has biased composition (basic residues); it reads MKKRKNKKNS. Positions 1–71 are disordered; the sequence is MKKRKNKKNS…EHPDEDEFNW (71 aa). The span at 11 to 27 shows a compositional bias: basic and acidic residues; sequence KAAEKALKVTINGKEET. The chain crosses the membrane as a helical span at residues 112–132; the sequence is AATIAFAAVIGTGLGLFALNI. The tract at residues 139-174 is disordered; it reads SAPASLEDSLGSQTAKAGDTSADKQTSGAEKQAAQT. Residues 161 to 174 are compositionally biased toward polar residues; that stretch reads DKQTSGAEKQAAQT. Residues 175 to 250 enclose the SPOR domain; it reads EGTYKTYAVQ…SDFEAWGGKE (76 aa).

It is found in the cell membrane. With respect to regulation, appears to be degraded early in engulfment, in correlation with its loss from polar septa. Its function is as follows. Facilitates the rapid and spatially regulated dissolution of septal peptidoglycan. This is Stage II sporulation protein B from Bacillus subtilis (strain 168).